The following is a 539-amino-acid chain: Chaperonin GroEL (539 aa).

Residues 29–32 (TIGP), 86–90 (DGTTT), Gly-413, 476–478 (NAA), and Asp-492 contribute to the ATP site.

Belongs to the chaperonin (HSP60) family. As to quaternary structure, forms a cylinder of 14 subunits composed of two heptameric rings stacked back-to-back. Interacts with the co-chaperonin GroES.

It localises to the cytoplasm. The enzyme catalyses ATP + H2O + a folded polypeptide = ADP + phosphate + an unfolded polypeptide.. Functionally, together with its co-chaperonin GroES, plays an essential role in assisting protein folding. The GroEL-GroES system forms a nano-cage that allows encapsulation of the non-native substrate proteins and provides a physical environment optimized to promote and accelerate protein folding. This chain is Chaperonin GroEL, found in Leuconostoc mesenteroides subsp. mesenteroides (strain ATCC 8293 / DSM 20343 / BCRC 11652 / CCM 1803 / JCM 6124 / NCDO 523 / NBRC 100496 / NCIMB 8023 / NCTC 12954 / NRRL B-1118 / 37Y).